Consider the following 612-residue polypeptide: tRNA(Met) cytidine acetyltransferase TmcA (612 aa).

ATP-binding positions include Gln136, 161-170 (GRGKSTLLGQ), and Arg284. The N-acetyltransferase domain occupies 319–499 (KHASELEEAL…PAAIYALPLT (181 aa)). Residue 424–426 (IAV) participates in acetyl-CoA binding.

It belongs to the RNA cytidine acetyltransferase family. TmcA subfamily.

It localises to the cytoplasm. The enzyme catalyses cytidine(34) in elongator tRNA(Met) + acetyl-CoA + ATP + H2O = N(4)-acetylcytidine(34) in elongator tRNA(Met) + ADP + phosphate + CoA + H(+). Its function is as follows. Catalyzes the formation of N(4)-acetylcytidine (ac(4)C) at the wobble position of tRNA(Met), by using acetyl-CoA as an acetyl donor and ATP (or GTP). The sequence is that of tRNA(Met) cytidine acetyltransferase TmcA from Idiomarina loihiensis (strain ATCC BAA-735 / DSM 15497 / L2-TR).